An 86-amino-acid polypeptide reads, in one-letter code: UPF0335 protein mll3968 (86 aa).

Belongs to the UPF0335 family.

This chain is UPF0335 protein mll3968, found in Mesorhizobium japonicum (strain LMG 29417 / CECT 9101 / MAFF 303099) (Mesorhizobium loti (strain MAFF 303099)).